The sequence spans 674 residues: DNA ligase (674 aa).

NAD(+) contacts are provided by residues 34 to 38, 84 to 85, and E116; these read DAEYD and SL. The active-site N6-AMP-lysine intermediate is the K118. NAD(+) is bound by residues R139, E174, K291, and K315. Positions 409, 412, 425, and 430 each coordinate Zn(2+). Residues 586-674 form the BRCT domain; it reads REGEALKGLT…TGKDPRALTA (89 aa).

The protein belongs to the NAD-dependent DNA ligase family. LigA subfamily. The cofactor is Mg(2+). Requires Mn(2+) as cofactor.

It catalyses the reaction NAD(+) + (deoxyribonucleotide)n-3'-hydroxyl + 5'-phospho-(deoxyribonucleotide)m = (deoxyribonucleotide)n+m + AMP + beta-nicotinamide D-nucleotide.. In terms of biological role, DNA ligase that catalyzes the formation of phosphodiester linkages between 5'-phosphoryl and 3'-hydroxyl groups in double-stranded DNA using NAD as a coenzyme and as the energy source for the reaction. It is essential for DNA replication and repair of damaged DNA. The chain is DNA ligase from Thermus sp. (strain AK16D).